We begin with the raw amino-acid sequence, 419 residues long: UDP-N-acetylglucosamine 1-carboxyvinyltransferase (419 aa).

A phosphoenolpyruvate-binding site is contributed by 22–23; sequence KN. UDP-N-acetyl-alpha-D-glucosamine is bound at residue R95. C119 functions as the Proton donor in the catalytic mechanism. C119 is subject to 2-(S-cysteinyl)pyruvic acid O-phosphothioketal. UDP-N-acetyl-alpha-D-glucosamine contacts are provided by residues 164-167, D308, and I330; that span reads KVSV.

This sequence belongs to the EPSP synthase family. MurA subfamily.

It localises to the cytoplasm. It catalyses the reaction phosphoenolpyruvate + UDP-N-acetyl-alpha-D-glucosamine = UDP-N-acetyl-3-O-(1-carboxyvinyl)-alpha-D-glucosamine + phosphate. The protein operates within cell wall biogenesis; peptidoglycan biosynthesis. Functionally, cell wall formation. Adds enolpyruvyl to UDP-N-acetylglucosamine. This is UDP-N-acetylglucosamine 1-carboxyvinyltransferase from Rickettsia africae (strain ESF-5).